A 234-amino-acid chain; its full sequence is Putative N-acetylmannosamine-6-phosphate 2-epimerase (234 aa).

Belongs to the NanE family.

It catalyses the reaction an N-acyl-D-glucosamine 6-phosphate = an N-acyl-D-mannosamine 6-phosphate. The protein operates within amino-sugar metabolism; N-acetylneuraminate degradation; D-fructose 6-phosphate from N-acetylneuraminate: step 3/5. Converts N-acetylmannosamine-6-phosphate (ManNAc-6-P) to N-acetylglucosamine-6-phosphate (GlcNAc-6-P). The polypeptide is Putative N-acetylmannosamine-6-phosphate 2-epimerase (Klebsiella pneumoniae subsp. pneumoniae (strain ATCC 700721 / MGH 78578)).